Consider the following 289-residue polypeptide: Bifunctional protein FolD (289 aa).

NADP(+) is bound by residues 165–167 (GAS) and Ser190.

Belongs to the tetrahydrofolate dehydrogenase/cyclohydrolase family. In terms of assembly, homodimer.

The enzyme catalyses (6R)-5,10-methylene-5,6,7,8-tetrahydrofolate + NADP(+) = (6R)-5,10-methenyltetrahydrofolate + NADPH. It carries out the reaction (6R)-5,10-methenyltetrahydrofolate + H2O = (6R)-10-formyltetrahydrofolate + H(+). It participates in one-carbon metabolism; tetrahydrofolate interconversion. Its function is as follows. Catalyzes the oxidation of 5,10-methylenetetrahydrofolate to 5,10-methenyltetrahydrofolate and then the hydrolysis of 5,10-methenyltetrahydrofolate to 10-formyltetrahydrofolate. This chain is Bifunctional protein FolD, found in Ralstonia nicotianae (strain ATCC BAA-1114 / GMI1000) (Ralstonia solanacearum).